A 262-amino-acid chain; its full sequence is Aminoglycoside (3'') (9) adenylyltransferase (262 aa).

The segment at M1–A157 is adenylyltransferase domain. ATP is bound by residues S36, S46, and D47. D47, D49, and E87 together coordinate Mg(2+). Residue E87 is the Proton acceptor of the active site. D130 provides a ligand contact to ATP. The helical domain stretch occupies residues P158–T262. Streptomycin contacts are provided by residues W173–D178 and H185. ATP is bound by residues K205 and Y231.

Monomer.

It carries out the reaction streptomycin + ATP = 3''-O-adenylylstreptomycin + diphosphate. The catalysed reaction is spectinomycin + ATP = 9-O-adenylylspectinomycin + diphosphate. Its function is as follows. Mediates bacterial resistance to the antibiotics streptomycin and spectinomycin, does not confer resistance to kanamycin. Binds ATP first, then antibiotic. The polypeptide is Aminoglycoside (3'') (9) adenylyltransferase (aadA) (Salmonella typhimurium (strain LT2 / SGSC1412 / ATCC 700720)).